Reading from the N-terminus, the 342-residue chain is MTQAVDIGTIQTLIRLEVPDQVPLTGSIPYDALVKKLKTPVDPELLQRLIRFTRLVGFLDEDAEGAVKHSPMSAIFVNDPDTAGQARFMADFGIRPCSFIYESIKLDPSGEAARQGPLALMAREPGAREGPTFFEVLEKDPVNRKRWHDGMAVHNDSMVRHVAGAYDWGTVQSLVDIGGSEGHVAAVIVNAFPHIQITVQDLPEIIEKARQRGDRHPNIIFEEHDFFTPQPRIADAYFLRLILHDWNDADCTRIVRQISSALRPGARLLIMDAVLPEPGEGSLQSERRLRRSDIGMYTLFSAKERSLAQMRRLVEDCDSRLRFEKLYTPPGSHASMLSWICE.

An S-adenosyl-L-methionine-binding site is contributed by aspartate 201. Catalysis depends on histidine 244, which acts as the Proton acceptor.

It belongs to the class I-like SAM-binding methyltransferase superfamily. Cation-independent O-methyltransferase family. As to quaternary structure, homodimer.

The enzyme catalyses 6-hydroxytryprostatin B + S-adenosyl-L-methionine = tryprostatin A + S-adenosyl-L-homocysteine + H(+). The protein operates within mycotoxin biosynthesis. Functionally, 6-hydroxytryprostatin B O-methyltransferase; part of the gene cluster that mediates the biosynthesis of fumitremorgins, indole alkaloids that carry not only intriguing chemical structures, but also interesting biological and pharmacological activities. The biosynthesis of fumitremorgin-type alkaloids begins by condensation of the two amino acids L-tryptophan and L-proline to brevianamide F, catalyzed by the non-ribosomal peptide synthetase ftmA. Brevianamide F is then prenylated by the prenyltransferase ftmPT1/ftmB in the presence of dimethylallyl diphosphate, resulting in the formation of tryprostatin B. The three cytochrome P450 monooxygenases, ftmP450-1/ftmC, ftmP450-2/ftmE and ftmP450-3/FtmG, are responsible for the conversion of tryprostatin B to 6-hydroxytryprostatin B, tryprostatin A to fumitremorgin C and fumitremorgin C to 12,13-dihydroxyfumitremorgin C, respectively. The putative methyltransferase ftmMT/ftmD is expected for the conversion of 6-hydroxytryprostatin B to tryprostatin A. FtmPT2/FtmH catalyzes the prenylation of 12,13-dihydroxyfumitre-morgin C in the presence of dimethylallyl diphosphate, resulting in the formation of fumitremorgin B. Fumitremorgin B is further converted to verruculogen by ftmOx1/ftmF via the insertion of an endoperoxide bond between the two prenyl moieties. In some fungal species, verruculogen is further converted to fumitremorgin A, but the enzymes involved in this step have not been identified yet. The polypeptide is 6-hydroxytryprostatin B O-methyltransferase (Aspergillus fumigatus (strain ATCC MYA-4609 / CBS 101355 / FGSC A1100 / Af293) (Neosartorya fumigata)).